Here is a 596-residue protein sequence, read N- to C-terminus: Genetic interactor of prohibitins 3, mitochondrial (596 aa).

A mitochondrion-targeting transit peptide spans 1 to 21 (MLNLCHALRGVRQFSCSVIVK). The 193-residue stretch at 113–305 (ESTLNDILNY…LFDLPGYSTS (193 aa)) folds into the CP-type G domain.

It belongs to the TRAFAC class YlqF/YawG GTPase family. GEP3 subfamily.

Its subcellular location is the mitochondrion. In terms of biological role, interacts genetically with prohibitins and thus may be involved in the mitochondrial lipid metabolism. This is Genetic interactor of prohibitins 3, mitochondrial (GEP3) from Saccharomyces cerevisiae (strain AWRI796) (Baker's yeast).